The sequence spans 303 residues: tRNA dimethylallyltransferase (303 aa).

G11–S18 contributes to the ATP binding site. T13–S18 serves as a coordination point for substrate. Interaction with substrate tRNA stretches follow at residues D36 to Q39 and Q159 to R163.

The protein belongs to the IPP transferase family. In terms of assembly, monomer. Mg(2+) is required as a cofactor.

It carries out the reaction adenosine(37) in tRNA + dimethylallyl diphosphate = N(6)-dimethylallyladenosine(37) in tRNA + diphosphate. Functionally, catalyzes the transfer of a dimethylallyl group onto the adenine at position 37 in tRNAs that read codons beginning with uridine, leading to the formation of N6-(dimethylallyl)adenosine (i(6)A). In Lawsonia intracellularis (strain PHE/MN1-00), this protein is tRNA dimethylallyltransferase.